The primary structure comprises 138 residues: FUN14 domain-containing protein fndc-1 (138 aa).

2 consecutive transmembrane segments (helical) span residues 37–56 (PMVQ…YFVT) and 61–78 (LVAA…FAIH). Residues N85 and N111 are each glycosylated (N-linked (GlcNAc...) asparagine).

It belongs to the FUN14 family. As to expression, broadly expressed in somatic tissues. Expressed in the hermaphrodite spermatheca and male gonad. Expressed in spermatids, but not expressed in oocytes.

It localises to the mitochondrion outer membrane. Its function is as follows. Mitophagy receptor which plays a role in paternal mitochondria degradation in embryos after the two-cell stage. In Caenorhabditis elegans, this protein is FUN14 domain-containing protein fndc-1.